Reading from the N-terminus, the 89-residue chain is Small ribosomal subunit protein uS14A (89 aa).

The protein belongs to the universal ribosomal protein uS14 family. Part of the 30S ribosomal subunit. Contacts proteins S3 and S10.

In terms of biological role, binds 16S rRNA, required for the assembly of 30S particles and may also be responsible for determining the conformation of the 16S rRNA at the A site. The sequence is that of Small ribosomal subunit protein uS14A from Lactococcus lactis subsp. lactis (strain IL1403) (Streptococcus lactis).